The chain runs to 350 residues: Histidinol-phosphate aminotransferase (350 aa).

An N6-(pyridoxal phosphate)lysine modification is found at Lys212.

The protein belongs to the class-II pyridoxal-phosphate-dependent aminotransferase family. Histidinol-phosphate aminotransferase subfamily. Homodimer. Pyridoxal 5'-phosphate serves as cofactor.

It catalyses the reaction L-histidinol phosphate + 2-oxoglutarate = 3-(imidazol-4-yl)-2-oxopropyl phosphate + L-glutamate. It functions in the pathway amino-acid biosynthesis; L-histidine biosynthesis; L-histidine from 5-phospho-alpha-D-ribose 1-diphosphate: step 7/9. The protein is Histidinol-phosphate aminotransferase of Geobacter sulfurreducens (strain ATCC 51573 / DSM 12127 / PCA).